Consider the following 505-residue polypeptide: 2,3-bisphosphoglycerate-independent phosphoglycerate mutase (505 aa).

Mn(2+) is bound by residues Asp15 and Ser65. Residue Ser65 is the Phosphoserine intermediate of the active site. Residues His126, 156 to 157, Arg187, Arg193, 260 to 263, and Lys333 each bind substrate; these read RD and RPDR. Asp398, His402, Asp439, His440, and His457 together coordinate Mn(2+).

Belongs to the BPG-independent phosphoglycerate mutase family. Monomer. Mn(2+) serves as cofactor.

It carries out the reaction (2R)-2-phosphoglycerate = (2R)-3-phosphoglycerate. It participates in carbohydrate degradation; glycolysis; pyruvate from D-glyceraldehyde 3-phosphate: step 3/5. In terms of biological role, catalyzes the interconversion of 2-phosphoglycerate and 3-phosphoglycerate. This is 2,3-bisphosphoglycerate-independent phosphoglycerate mutase from Mycoplasmopsis pulmonis (strain UAB CTIP) (Mycoplasma pulmonis).